A 68-amino-acid chain; its full sequence is Protein SlyX homolog (68 aa).

It belongs to the SlyX family.

The chain is Protein SlyX homolog from Brucella abortus (strain S19).